A 297-amino-acid polypeptide reads, in one-letter code: Guanylate kinase (297 aa).

The Guanylate kinase-like domain occupies 5 to 184; the sequence is GKVIIISGPS…AVSKITDILI (180 aa). 12–19 provides a ligand contact to ATP; that stretch reads GPSGVGKG. The unknown stretch occupies residues 205–297; that stretch reads ENIVDQKYTY…IKQRSDFSGD (93 aa).

Belongs to the guanylate kinase family.

The protein resides in the cytoplasm. It carries out the reaction GMP + ATP = GDP + ADP. Its function is as follows. Essential for recycling GMP and indirectly, cGMP. The chain is Guanylate kinase (gmk) from Mesoplasma florum (strain ATCC 33453 / NBRC 100688 / NCTC 11704 / L1) (Acholeplasma florum).